The chain runs to 238 residues: Probable transglycosylase SceD 1 (238 aa).

The N-terminal stretch at 1–27 (MKKTVVASTLAVGLGVTGFAAGNSADA) is a signal peptide. The span at 87-97 (TNAPAQETAEQ) shows a compositional bias: polar residues. Positions 87–161 (TNAPAQETAE…SEASEGSSVN (75 aa)) are disordered. Positions 102-156 (EQPQQTEQASTEQPAQEAAPQTEETQQPQQEATTQTTSSSNESTSNESSSSEASE) are enriched in low complexity.

This sequence belongs to the transglycosylase family. SceD subfamily.

It is found in the secreted. In terms of biological role, is able to cleave peptidoglycan and affects clumping and separation of bacterial cells. The sequence is that of Probable transglycosylase SceD 1 (sceD1) from Staphylococcus saprophyticus subsp. saprophyticus (strain ATCC 15305 / DSM 20229 / NCIMB 8711 / NCTC 7292 / S-41).